Reading from the N-terminus, the 84-residue chain is MVIIRLARGGSKKRPFYNIVATDSRNRRDGRFIERVGFYNPVATKGESLRIAQDRLTYWQGVGAQLSPTVQRLVKEAQKAQPAA.

Belongs to the bacterial ribosomal protein bS16 family.

The protein is Small ribosomal subunit protein bS16 of Burkholderia ambifaria (strain MC40-6).